Reading from the N-terminus, the 423-residue chain is Hypoxia responsive morphology factor B (423 aa).

Positions 46–69 (KRSKTRRPKKEYKLQYENTKAHRV) match the Bipartite nuclear localization signal motif. The segment at 157-187 (TQNCWAYRAAYLNAVHTIFSEQICSAMEVSP) is RNA recognition motif (RRM)-like domain. Over residues 243-257 (LSPQSGRGPEPSTQI) the composition is skewed to polar residues. The segment at 243–273 (LSPQSGRGPEPSTQIAEPGRHDSQSEQSTIS) is disordered.

It belongs to the hrmA family.

Its subcellular location is the nucleus. Its function is as follows. Probably modulates the generation of the hypoxia-typic morphotype (called H-MORPH) with altered biofilm architecture that leads to increased host inflammation, rapid disease progression, and mortality in a murine model of invasive aspergillosis. The polypeptide is Hypoxia responsive morphology factor B (Aspergillus fumigatus (strain CBS 144.89 / FGSC A1163 / CEA10) (Neosartorya fumigata)).